Reading from the N-terminus, the 159-residue chain is 2-C-methyl-D-erythritol 2,4-cyclodiphosphate synthase (159 aa).

Asp-10 and His-12 together coordinate a divalent metal cation. 4-CDP-2-C-methyl-D-erythritol 2-phosphate is bound by residues Asp-10 to His-12 and His-36 to Ser-37. His-44 is a binding site for a divalent metal cation. Residues Asp-58–Gly-60, Thr-134–Glu-137, Phe-141, and Arg-144 contribute to the 4-CDP-2-C-methyl-D-erythritol 2-phosphate site.

This sequence belongs to the IspF family. Homotrimer. It depends on a divalent metal cation as a cofactor.

It catalyses the reaction 4-CDP-2-C-methyl-D-erythritol 2-phosphate = 2-C-methyl-D-erythritol 2,4-cyclic diphosphate + CMP. Its pathway is isoprenoid biosynthesis; isopentenyl diphosphate biosynthesis via DXP pathway; isopentenyl diphosphate from 1-deoxy-D-xylulose 5-phosphate: step 4/6. Involved in the biosynthesis of isopentenyl diphosphate (IPP) and dimethylallyl diphosphate (DMAPP), two major building blocks of isoprenoid compounds. Catalyzes the conversion of 4-diphosphocytidyl-2-C-methyl-D-erythritol 2-phosphate (CDP-ME2P) to 2-C-methyl-D-erythritol 2,4-cyclodiphosphate (ME-CPP) with a corresponding release of cytidine 5-monophosphate (CMP). The polypeptide is 2-C-methyl-D-erythritol 2,4-cyclodiphosphate synthase (Bacteroides fragilis (strain ATCC 25285 / DSM 2151 / CCUG 4856 / JCM 11019 / LMG 10263 / NCTC 9343 / Onslow / VPI 2553 / EN-2)).